A 305-amino-acid chain; its full sequence is Glycine cleavage system transcriptional activator (305 aa).

The HTH lysR-type domain maps to 6–63 (PPLNALRVFDAAARHLSFTRAAEELFVTQAAVSHQIKSLEDFLGLKLFRRRNRSLLLT). Positions 23-42 (FTRAAEELFVTQAAVSHQIK) form a DNA-binding region, H-T-H motif.

Belongs to the LysR transcriptional regulatory family.

Its subcellular location is the cytoplasm. Regulatory protein for the glycine cleavage system operon (gcv). Mediates activation of gcv by glycine and repression by purines. GcvA is negatively autoregulated. Binds to three sites upstream of the gcv promoter. This chain is Glycine cleavage system transcriptional activator (gcvA), found in Escherichia coli O157:H7.